The sequence spans 655 residues: Chaperone protein dnaK1 (655 aa).

T197 bears the Phosphothreonine; by autocatalysis mark.

This sequence belongs to the heat shock protein 70 family.

In terms of biological role, acts as a chaperone. This is Chaperone protein dnaK1 (dnaK1) from Synechococcus elongatus (strain ATCC 33912 / PCC 7942 / FACHB-805) (Anacystis nidulans R2).